A 71-amino-acid polypeptide reads, in one-letter code: Putative RNA-binding regulatory peptide (71 aa).

In terms of assembly, interacts with IGF2BP1 (via KH3 and KH4 domains); the interaction results in increased binding of IGF2BP1 to N6-methyladenosine (m6A)-containing mRNAs. As to expression, detected in colon (at protein level).

Functionally, enhances binding of IGF2BP1 to N6-methyladenosine (m6A)-containing mRNAs, thereby contributing to increased mRNA stability. Also increases the interaction of IGF2BP1 with RNA stabilizers ELAVL1/HUR, MATR3 and PABPC1, and increases the interaction of RNA stabilizers ELAVL1/HUR, MATR3 and PABPC1 with m6A-containing mRNAs. Contributes to MYC stability by enhancing binding of IGF2BP1 to m6A-containing MYC mRNAs and increasing recruitment of RNA stabilizing proteins to m6A-containing MYC mRNAs. The sequence is that of Putative RNA-binding regulatory peptide from Homo sapiens (Human).